The primary structure comprises 334 residues: MNAVTEGRKVLLEIADLKVHFEIKDGKQWFWQPPKTLKAVDGVTLRLYEGETLGVVGESGCGKSTFARAIIGLVKATDGHVAWLGKELLGMKPDEWRAVRSDIQMIFQDPLASLNPRMTIGEIIAEPLRTYHPKMSRQEVRERVKAMMLKVGLLPNLINRYPHEFSGGQCQRIGIARALILEPKLIICDEPVSALDVSIQAQVVNLLQQLQREMGLSLIFIAHDLAVVKHISDRVLVMYLGHAVELGTYDEVYHNPLHPYTRALMSAVPIPDPDLEKNKTIQLLEGELPSPINPPSGCVFRTRCPIAGPECAKTRPVLEGSFRHSVSCLKVDPL.

One can recognise an ABC transporter domain in the interval 12–265 (LEIADLKVHF…PLHPYTRALM (254 aa)). 57–64 (GESGCGKS) lines the ATP pocket.

It belongs to the ABC transporter superfamily. The complex is composed of two ATP-binding proteins (OppD and OppF), two transmembrane proteins (OppB and OppC) and a solute-binding protein (OppA or MppA).

It localises to the cell inner membrane. The enzyme catalyses a [peptide](out) + ATP + H2O = a [peptide](in) + ADP + phosphate + H(+). The catalysed reaction is L-alanyl-gamma-D-glutamyl-meso-2,6-diaminopimelate(out) + ATP + H2O = L-alanyl-gamma-D-glutamyl-meso-2,6-diaminopimelate(in) + ADP + phosphate + H(+). In terms of biological role, part of the ABC transporter complex OppABCDF involved in the uptake of oligopeptides and of the ABC transporter complex MppA-OppBCDF involved in the uptake of the cell wall murein tripeptide L-alanyl-gamma-D-glutamyl-meso-diaminopimelate. Probably responsible for energy coupling to the transport system. Plays an important nutritional role and is involved in the recycling of cell wall peptides. This Escherichia coli (strain K12) protein is Oligopeptide transport ATP-binding protein OppF (oppF).